A 365-amino-acid polypeptide reads, in one-letter code: Histidinol-phosphate aminotransferase (365 aa).

A disordered region spans residues 1-22 (MSRPVPNPGILDIAPYTPGKSP). Residue Lys-221 is modified to N6-(pyridoxal phosphate)lysine.

Belongs to the class-II pyridoxal-phosphate-dependent aminotransferase family. Histidinol-phosphate aminotransferase subfamily. Homodimer. Pyridoxal 5'-phosphate is required as a cofactor.

The catalysed reaction is L-histidinol phosphate + 2-oxoglutarate = 3-(imidazol-4-yl)-2-oxopropyl phosphate + L-glutamate. It participates in amino-acid biosynthesis; L-histidine biosynthesis; L-histidine from 5-phospho-alpha-D-ribose 1-diphosphate: step 7/9. The chain is Histidinol-phosphate aminotransferase from Rhodopseudomonas palustris (strain BisB5).